Consider the following 427-residue polypeptide: Gamma-glutamyl phosphate reductase (427 aa).

The protein belongs to the gamma-glutamyl phosphate reductase family.

It is found in the cytoplasm. The catalysed reaction is L-glutamate 5-semialdehyde + phosphate + NADP(+) = L-glutamyl 5-phosphate + NADPH + H(+). It functions in the pathway amino-acid biosynthesis; L-proline biosynthesis; L-glutamate 5-semialdehyde from L-glutamate: step 2/2. Its function is as follows. Catalyzes the NADPH-dependent reduction of L-glutamate 5-phosphate into L-glutamate 5-semialdehyde and phosphate. The product spontaneously undergoes cyclization to form 1-pyrroline-5-carboxylate. This chain is Gamma-glutamyl phosphate reductase, found in Rhizobium meliloti (strain 1021) (Ensifer meliloti).